The following is a 60-amino-acid chain: Large ribosomal subunit protein bL32B (60 aa).

Positions 1–19 are enriched in basic residues; the sequence is MAVPKRKMSRANTRHRRSQ. Residues 1–20 are disordered; sequence MAVPKRKMSRANTRHRRSQW.

The protein belongs to the bacterial ribosomal protein bL32 family.

The chain is Large ribosomal subunit protein bL32B from Saccharopolyspora erythraea (strain ATCC 11635 / DSM 40517 / JCM 4748 / NBRC 13426 / NCIMB 8594 / NRRL 2338).